A 275-amino-acid polypeptide reads, in one-letter code: Photosystem II extrinsic protein O (275 aa).

Positions 1-28 (MRFRTLLIAFLALCLGLITACSEGPANA) are cleaved as a signal peptide.

The protein belongs to the PsbO family. PSII is composed of 1 copy each of membrane proteins PsbA, PsbB, PsbC, PsbD, PsbE, PsbF, PsbH, PsbI, PsbJ, PsbK, PsbL, PsbM, PsbT, PsbX, PsbY, PsbZ, Psb30/Ycf12, peripheral proteins PsbO, CyanoQ (PsbQ), PsbU, PsbV and a large number of cofactors. It forms dimeric complexes.

The protein localises to the cellular thylakoid membrane. One of the extrinsic, lumenal subunits of photosystem II (PSII), which stabilize and protect the oxygen-evolving complex. PSII is a light-driven water plastoquinone oxidoreductase, using light energy to abstract electrons from H(2)O, generating a proton gradient subsequently used for ATP formation. Required for dimerization of PSII and for binding of PsbQ to PSII. In Crocosphaera subtropica (strain ATCC 51142 / BH68) (Cyanothece sp. (strain ATCC 51142)), this protein is Photosystem II extrinsic protein O.